The primary structure comprises 83 residues: uncharacterized protein (83 aa).

This sequence belongs to the chlamydial CPn_0710/CT_666/TC_0037 family.

This is an uncharacterized protein from Chlamydia trachomatis serovar D (strain ATCC VR-885 / DSM 19411 / UW-3/Cx).